A 299-amino-acid polypeptide reads, in one-letter code: Lathosterol oxidase (299 aa).

The next 3 membrane-spanning stretches (helical) occupy residues 32 to 52 (VSLL…CATL), 79 to 99 (FTVK…LLEL), and 117 to 137 (IHLI…IYWI). The 129-residue stretch at 124-252 (ISFLFFTDML…YFTLWDRIGG (129 aa)) folds into the Fatty acid hydroxylase domain. A Histidine box-1 motif is present at residues 138–143 (HRGLHH). A Histidine box-2 motif is present at residues 151–155 (HKPHH). Residues 228-233 (HHTDHH) carry the Histidine box-3 motif. S253 carries the phosphoserine modification.

This sequence belongs to the sterol desaturase family. Fe cation serves as cofactor.

It is found in the endoplasmic reticulum membrane. It carries out the reaction a Delta(7)-sterol + 2 Fe(II)-[cytochrome b5] + O2 + 2 H(+) = a Delta(5),Delta(7)-sterol + 2 Fe(III)-[cytochrome b5] + 2 H2O. The enzyme catalyses lathosterol + 2 Fe(II)-[cytochrome b5] + O2 + 2 H(+) = 7-dehydrocholesterol + 2 Fe(III)-[cytochrome b5] + 2 H2O. It catalyses the reaction 5alpha-cholesta-7,24-dien-3beta-ol + 2 Fe(II)-[cytochrome b5] + O2 + 2 H(+) = 7-dehydrodesmosterol + 2 Fe(III)-[cytochrome b5] + 2 H2O. Its pathway is steroid biosynthesis; cholesterol biosynthesis. In terms of biological role, catalyzes the penultimate step of the biosynthesis of cholesterol, the dehydrogenation of lathosterol into 7-dehydrocholesterol (7-DHC). Cholesterol is the major sterol component in mammalian membranes and a precursor for bile acid and steroid hormone synthesis. In addition to its essential role in cholesterol biosynthesis, it also indirectly regulates ferroptosis through the production of 7-DHC. By diverting the spread of damage caused by peroxyl radicals from the phospholipid components to its sterol nucleus, 7-DHC prevents this form of cell death. In Rattus norvegicus (Rat), this protein is Lathosterol oxidase.